The primary structure comprises 204 residues: MGDTDLPCVTGVLLAAGAGKRLGRGPKALLPYRGRTLVEDAAETMLVGGCHEVVIVLGANAQAVCARANLEPYRIVVNHDWSSGMGSSYLAGDAAAHTKNHILVALVDQPGLSVTTVGRLLVSHRPGRISSAAYSSLDSPRVLRRGHPMVIDAGLRPAVASTVSGDAGARVFLRQKPWLVDLIDCSDESTGEDVDTVEQMYRLL.

Homotetramer. FMN is required as a cofactor.

The enzyme catalyses 3,3'-bipyridine-2,2',5,5',6,6'-hexol + NADP(+) = (E)-2,2',5,5'-tetrahydroxy-6H,6'H-(3,3'-bipyridinylidene)-6,6'-dione + NADPH + 3 H(+). The catalysed reaction is 3,3'-bipyridine-2,2',5,5',6,6'-hexol + NAD(+) = (E)-2,2',5,5'-tetrahydroxy-6H,6'H-(3,3'-bipyridinylidene)-6,6'-dione + NADH + 3 H(+). It participates in alkaloid degradation; nicotine degradation. Functionally, catalyzes the reduction of nicotine blue to its hydroquinone form. Nicotine blue is the name given to the compound formed by the autocatalytic condensation of two molecules of 2,3,6-trihydroxypyridine, an intermediate in the nicotine degradation pathway. May play a role in preventing the intracellular formation of nicotine blue semiquinone radicals, which by redox cycling would lead to the formation of toxic reactive oxygen species. Besides nicotine blue, several other quinones are reduced by nboR. The protein is Nicotine blue oxidoreductase (nboR) of Paenarthrobacter nicotinovorans (Arthrobacter nicotinovorans).